We begin with the raw amino-acid sequence, 68 residues long: MLDRNSKSVLVAFYRSGNIFRYNQCSDSMETSTISSPSRRIRNNFLGLLGTRGARLSRLSWGNDTSKS.

This is an uncharacterized protein from Feline immunodeficiency virus (strain San Diego) (FIV).